The primary structure comprises 482 residues: NAD(+) hydrolase ThsA (482 aa).

A Deacetylase sirtuin-type domain is found at 3–281 (EHEQKIMIDR…EEITKRFRCK (279 aa)). NAD(+)-binding residues include aspartate 112 and histidine 150. Histidine 150 serves as the catalytic Proton acceptor. The tract at residues 282–482 (NVFLSGSAHE…SKIHDVIKLI (201 aa)) is SLOG (STALD) domain. Residues glycine 287, serine 288, leucine 324, phenylalanine 355, arginine 373, lysine 390, glycine 407, and glutamate 411 each coordinate 3'cADPR.

The protein belongs to the soluble Thoeris ThsA family. As to quaternary structure, homotetramer in solution.

It catalyses the reaction NAD(+) + H2O = ADP-D-ribose + nicotinamide + H(+). With respect to regulation, in vivo probably activated by a cyclic ADP-D-ribose generated by ThsB (might be 3'cADPR). Its function is as follows. NAD(+) hydrolyzing component (NADase) of the Thoeris antiviral defense system, composed of ThsA and ThsB (maybe J591_1492). As purified, has NADase activity that is not activated by any tested cADPR isomers; binds 3'cADPR better than 2'cADPR. It was suggested the purified protein is already in a fully active state. Upon activation binds and hydrolyzes NAD(+), leading to cell death and inhibition of phage replication. This Acinetobacter baumannii (strain 532279) protein is NAD(+) hydrolase ThsA.